Here is a 529-residue protein sequence, read N- to C-terminus: DEP domain-containing protein 1B (529 aa).

A DEP domain is found at 24-108 (FRARMPLRRH…DNRHLYRFPP (85 aa)). Ser-160 is modified (phosphoserine). Positions 201-393 (DSLEEVLNTK…FLMDNYQEIL (193 aa)) constitute a Rho-GAP domain. The residue at position 436 (Ser-436) is a Phosphoserine.

The chain is DEP domain-containing protein 1B (Depdc1b) from Mus musculus (Mouse).